Reading from the N-terminus, the 328-residue chain is Ankyrin repeat domain-containing protein 2 (328 aa).

The residue at position 36 (Ser36) is a Phosphoserine. Phosphoserine; by PKB/AKT2 is present on Ser68. Residues 96–116 form a disordered region; that stretch reads RDALAAAQEPPPEPEEITGPV. ANK repeat units follow at residues 116-145, 149-178, 182-211, 215-244, and 248-277; these read VNEE…SADT, FRRT…TVDF, LDCT…DTNV, LLST…DINA, and EGDS…DMMA. The disordered stretch occupies residues 297–328; that stretch reads RHALEHPEPESEQNGLERPGSGRETPQPIPAQ.

As to quaternary structure, interacts with ID3; both proteins cooperate in myoblast differentiation. Interacts with TTN/titin. Interacts (via ANK repeats) with TCAP; the interaction is direct. Interacts with TJP1 (via PDZ domains). Interacts with PML; the interaction is direct. Interacts with p53/TP53. Interacts with YBX1. Interacts with AKT2. Phosphorylation at Ser-68 by PKB/AKT2 in response to oxidative stress induces translocation to the nucleus and negatively regulates myoblast differentiation. In terms of tissue distribution, expressed by myoblasts (at protein level). Expressed in skeletal and cardiac muscles.

It is found in the cytoplasm. The protein resides in the myofibril. Its subcellular location is the sarcomere. The protein localises to the i band. It localises to the cytosol. It is found in the nucleus. The protein resides in the PML body. In terms of biological role, functions as a negative regulator of myocyte differentiation. May interact with both sarcoplasmic structural proteins and nuclear proteins to regulate gene expression during muscle development and in response to muscle stress. This Mus musculus (Mouse) protein is Ankyrin repeat domain-containing protein 2 (Ankrd2).